A 435-amino-acid chain; its full sequence is uncharacterized protein (435 aa).

Positions 7-58 constitute an F-box domain; the sequence is PFPITKLPLVPRCKILKFFDYGDLLDISLCSKRMAQTVRDIHITADLHYLTL.

This is an uncharacterized protein from Caenorhabditis elegans.